A 249-amino-acid polypeptide reads, in one-letter code: DNA repair protein RecO (249 aa).

This sequence belongs to the RecO family.

In terms of biological role, involved in DNA repair and RecF pathway recombination. The chain is DNA repair protein RecO from Lactobacillus delbrueckii subsp. bulgaricus (strain ATCC BAA-365 / Lb-18).